The primary structure comprises 51 residues: Large ribosomal subunit protein bL33 (51 aa).

This sequence belongs to the bacterial ribosomal protein bL33 family.

The protein is Large ribosomal subunit protein bL33 of Alteromonas mediterranea (strain DSM 17117 / CIP 110805 / LMG 28347 / Deep ecotype).